A 135-amino-acid polypeptide reads, in one-letter code: Ig heavy chain V region XIG14 (135 aa).

Residues 1-18 (DFIIFFIFMFFSPSCILS) form the signal peptide. The region spanning 20-128 (TLQESGPGTV…GYNFDYWGQG (109 aa)) is the Ig-like domain.

The protein is Ig heavy chain V region XIG14 of Xenopus laevis (African clawed frog).